Consider the following 288-residue polypeptide: 33 kDa chaperonin (288 aa).

Intrachain disulfides connect C233–C235 and C267–C270.

Belongs to the HSP33 family. In terms of processing, under oxidizing conditions two disulfide bonds are formed involving the reactive cysteines. Under reducing conditions zinc is bound to the reactive cysteines and the protein is inactive.

Its subcellular location is the cytoplasm. Redox regulated molecular chaperone. Protects both thermally unfolding and oxidatively damaged proteins from irreversible aggregation. Plays an important role in the bacterial defense system toward oxidative stress. This Actinobacillus succinogenes (strain ATCC 55618 / DSM 22257 / CCUG 43843 / 130Z) protein is 33 kDa chaperonin.